The following is a 257-amino-acid chain: 3-methyl-2-oxobutanoate hydroxymethyltransferase (257 aa).

2 residues coordinate Mg(2+): aspartate 42 and aspartate 86. 3-methyl-2-oxobutanoate contacts are provided by residues 42–43 (DS), aspartate 86, and lysine 116. A Mg(2+)-binding site is contributed by glutamate 118. The active-site Proton acceptor is the glutamate 185.

This sequence belongs to the PanB family. Homodecamer; pentamer of dimers. Mg(2+) is required as a cofactor.

It is found in the cytoplasm. It carries out the reaction 3-methyl-2-oxobutanoate + (6R)-5,10-methylene-5,6,7,8-tetrahydrofolate + H2O = 2-dehydropantoate + (6S)-5,6,7,8-tetrahydrofolate. It participates in cofactor biosynthesis; (R)-pantothenate biosynthesis; (R)-pantoate from 3-methyl-2-oxobutanoate: step 1/2. Functionally, catalyzes the reversible reaction in which hydroxymethyl group from 5,10-methylenetetrahydrofolate is transferred onto alpha-ketoisovalerate to form ketopantoate. In Prochlorococcus marinus (strain MIT 9215), this protein is 3-methyl-2-oxobutanoate hydroxymethyltransferase.